The following is a 105-amino-acid chain: Integration host factor (105 aa).

The short motif at 64–71 (LPKVGKVK) is the H2TH motif, binds DNA element. The interval 82-94 (APTRRLRGLGDRQ) is lid, binds DNA.

This sequence belongs to the actinobacterial IHF (aIHF) family. In terms of assembly, binds DNA as a monomer. (Microbial infection) Forms a complex with L5 Int and attP DNA. The complex binds attB to form products.

Its subcellular location is the cytoplasm. It localises to the nucleoid. A nucleoid-associated protein (NAP) that binds DNA without any sequence specificity. Compacts DNA. Binds along the whole chromosome in a dynamic manner, has equal affinity for the oriC site, attB and a randon 62% GC-rich sequence. Plays a role in transcription regulation. In terms of biological role, (Microbial infection) Stimulates temperate Mycobacterium phage L5 Int-mediated recombination in vitro using supercoiled attP (phage attachment site) DNA, linear attB DNA (bacterial attachment site) and L5 integrase (L5 Int or Int-L5, AC P22884). mIHF acts on L5 Int to stimulate formation of a specific intasome complex. mIHF probably stabilizes a sharp bend in the DNA during phage integration. The chain is Integration host factor from Mycolicibacterium smegmatis (strain ATCC 700084 / mc(2)155) (Mycobacterium smegmatis).